We begin with the raw amino-acid sequence, 796 residues long: MFNLIRKSTEWGGKTLILESGKIARQANGAVMVSYAGTTVLATVVTGKTKEPVDFLPLTVQFVAKSYAVGKIPGGFLKREGKPSDRETLISRLIDRSIRPLFPSGFYDEVSIVCNLLSYDTVTPPEVTALIGATAALSISGVSFNGLVAGVRIGYLPSEDKYLLNASADDMLYSSLDLFLSGNEDSVLMVESEASELSESQMLRAVTFGHQNCQEVINLIREFSEEKGVQPIEFIPHDINPIVNYIESSYKQDFSLAYSNTVKKERVLKLEELRDKVLSDFAEKCSVDNVECDNQDVISALKSFERSLVRSQIVETSSRIDGRAFDEIRNIEIEVDVLPKAHGSALFTRGNTQALVVTALGTPQDEQIVDDLDGDRRENFLLHYNFPPYAVGESAALRAPGRREIGHGKLAWRAIRYVLPEKSDFPYTIRVVSEITESDGSSSMATVCGASLALMDTGVPIKSPVAGIAMGLIKEGDKFIILSDILGDEDYLGDMDFKVAGTAEGVTALQMDMKISGISVDVIEKALLQAKDGRMHILSKMNAVIQESRNSIKNHAPRIESIFINKDKIRNVIGSGGKNIRDICEKTGAKIEIIQDGTVMIYAVNNEAVEYAKSMIMDIVTEPEIGKVFEGTVVEIVKFGAFVNFLGGKRGLIHISEIKNEHISAVGSVISVNDKVKVLVIGIDREHVQLSMRRVDQETGEPIDGELYNVRKSSFSDDSSSSGTSSSGSSFKESYSGNRHGSHEKRRSGGSRSSRRNSSGSNYYREDLHSSDFGNNNRSFSNSRNGHEVPRKPRFF.

The Mg(2+) site is built by aspartate 490 and aspartate 496. In terms of domain architecture, KH spans 557–616 (PRIESIFINKDKIRNVIGSGGKNIRDICEKTGAKIEIIQDGTVMIYAVNNEAVEYAKSMI). The region spanning 626–693 (GKVFEGTVVE…DREHVQLSMR (68 aa)) is the S1 motif domain. Positions 714–736 (SFSDDSSSSGTSSSGSSFKESYS) are enriched in low complexity. Positions 714-796 (SFSDDSSSSG…HEVPRKPRFF (83 aa)) are disordered. The span at 740–755 (HGSHEKRRSGGSRSSR) shows a compositional bias: basic residues. Over residues 771–784 (SDFGNNNRSFSNSR) the composition is skewed to low complexity. The span at 785-796 (NGHEVPRKPRFF) shows a compositional bias: basic and acidic residues.

It belongs to the polyribonucleotide nucleotidyltransferase family. Requires Mg(2+) as cofactor.

The protein localises to the cytoplasm. The catalysed reaction is RNA(n+1) + phosphate = RNA(n) + a ribonucleoside 5'-diphosphate. Its function is as follows. Involved in mRNA degradation. Catalyzes the phosphorolysis of single-stranded polyribonucleotides processively in the 3'- to 5'-direction. In Ehrlichia canis (strain Jake), this protein is Polyribonucleotide nucleotidyltransferase.